We begin with the raw amino-acid sequence, 62 residues long: Conotoxin Qc5.2 (62 aa).

The first 22 residues, 1–22, serve as a signal peptide directing secretion; it reads MRCVPVFIILLLLSPSAPSVDA. A propeptide spanning residues 23 to 48 is cleaved from the precursor; it reads HPMTKDDVPQASLHDDAKRTLQVPWM. At V60 the chain carries Valine amide.

This sequence belongs to the conotoxin T superfamily. In terms of processing, contains 2 disulfide bonds that can be either 'C1-C3, C2-C4' or 'C1-C4, C2-C3', since these disulfide connectivities have been observed for conotoxins with cysteine framework V (for examples, see AC P0DQQ7 and AC P81755). Expressed by the venom duct.

Its subcellular location is the secreted. This chain is Conotoxin Qc5.2, found in Conus quercinus (Oak cone).